A 249-amino-acid chain; its full sequence is Mannose-binding protein C (249 aa).

The N-terminal stretch at 1 to 20 (MSLFTSLPFLLLTAVTASCA) is a signal peptide. Residues 43-101 (GINGIPGKDGRDGAKGEKGEPGQGLRGSQGPPGKMGPQGTPGIPGIPGPIGQKGDPGEN) enclose the Collagen-like domain. Positions 43–103 (GINGIPGKDG…QKGDPGENMG (61 aa)) are disordered. Residue P48 is modified to 4-hydroxyproline. A compositionally biased stretch (basic and acidic residues) spans 50–62 (KDGRDGAKGEKGE). A 4-hydroxyproline mark is found at P63, P74, P83, and P86. A compositionally biased stretch (low complexity) spans 79 to 95 (PQGTPGIPGIPGPIGQK). A coiled-coil region spans residues 113-131 (RATLQSELNQIKNWLIFSL). The C-type lectin domain maps to 135-246 (VGKKAFFTNG…CSASFLTVCE (112 aa)). Intrachain disulfides connect C156/C245 and C223/C237.

As to quaternary structure, oligomeric complex of 3 or more homotrimers. Interacts with MASP1 and MASP2. Interacts with MEP1A and MEP1B and may inhibit their catalytic activity. In terms of processing, hydroxylation on proline residues within the sequence motif, GXPG, is most likely to be 4-hydroxy as this fits the requirement for 4-hydroxylation in vertebrates.

It localises to the secreted. In terms of biological role, calcium-dependent lectin involved in innate immune defense. Binds mannose, fucose and N-acetylglucosamine on different microorganisms and activates the lectin complement pathway. Binds to late apoptotic cells, as well as to apoptotic blebs and to necrotic cells, but not to early apoptotic cells, facilitating their uptake by macrophages. The sequence is that of Mannose-binding protein C (MBL) from Bos taurus (Bovine).